The sequence spans 475 residues: ATP synthase subunit beta 1 (475 aa).

Residue glycine 153–threonine 160 coordinates ATP.

The protein belongs to the ATPase alpha/beta chains family. As to quaternary structure, F-type ATPases have 2 components, CF(1) - the catalytic core - and CF(0) - the membrane proton channel. CF(1) has five subunits: alpha(3), beta(3), gamma(1), delta(1), epsilon(1). CF(0) has three main subunits: a(1), b(2) and c(9-12). The alpha and beta chains form an alternating ring which encloses part of the gamma chain. CF(1) is attached to CF(0) by a central stalk formed by the gamma and epsilon chains, while a peripheral stalk is formed by the delta and b chains.

Its subcellular location is the cell membrane. The catalysed reaction is ATP + H2O + 4 H(+)(in) = ADP + phosphate + 5 H(+)(out). Functionally, produces ATP from ADP in the presence of a proton gradient across the membrane. The catalytic sites are hosted primarily by the beta subunits. In Mycoplasmopsis pulmonis (strain UAB CTIP) (Mycoplasma pulmonis), this protein is ATP synthase subunit beta 1.